The primary structure comprises 277 residues: Probable endonuclease 4 (277 aa).

Residues His-67, His-107, Glu-141, Asp-173, His-176, His-210, Asp-223, His-225, and Glu-255 each coordinate Zn(2+).

Belongs to the AP endonuclease 2 family. The cofactor is Zn(2+).

It carries out the reaction Endonucleolytic cleavage to 5'-phosphooligonucleotide end-products.. In terms of biological role, endonuclease IV plays a role in DNA repair. It cleaves phosphodiester bonds at apurinic or apyrimidinic (AP) sites, generating a 3'-hydroxyl group and a 5'-terminal sugar phosphate. The polypeptide is Probable endonuclease 4 (Haloarcula marismortui (strain ATCC 43049 / DSM 3752 / JCM 8966 / VKM B-1809) (Halobacterium marismortui)).